Here is a 179-residue protein sequence, read N- to C-terminus: Large ribosomal subunit protein uL6c (179 aa).

The protein belongs to the universal ribosomal protein uL6 family. Part of the 50S ribosomal subunit.

It is found in the plastid. The protein resides in the cyanelle. In terms of biological role, binds 23S rRNA. This chain is Large ribosomal subunit protein uL6c (rpl6), found in Cyanophora paradoxa.